The sequence spans 59 residues: Transcription elongation factor Spt4 (59 aa).

Residues Cys-4, Cys-7, Cys-16, and Cys-19 each contribute to the Zn(2+) site.

It belongs to the archaeal Spt4 family. Heterodimer composed of Spt4 and Spt5.

Functionally, stimulates transcription elongation. The sequence is that of Transcription elongation factor Spt4 from Methanocaldococcus jannaschii (strain ATCC 43067 / DSM 2661 / JAL-1 / JCM 10045 / NBRC 100440) (Methanococcus jannaschii).